Here is a 238-residue protein sequence, read N- to C-terminus: ATP-dependent Clp protease proteolytic subunit 4 (238 aa).

Serine 113 (nucleophile) is an active-site residue. Histidine 138 is an active-site residue.

The protein belongs to the peptidase S14 family. As to quaternary structure, fourteen ClpP subunits assemble into 2 heptameric rings which stack back to back to give a disk-like structure with a central cavity, resembling the structure of eukaryotic proteasomes.

Its subcellular location is the cytoplasm. It carries out the reaction Hydrolysis of proteins to small peptides in the presence of ATP and magnesium. alpha-casein is the usual test substrate. In the absence of ATP, only oligopeptides shorter than five residues are hydrolyzed (such as succinyl-Leu-Tyr-|-NHMec, and Leu-Tyr-Leu-|-Tyr-Trp, in which cleavage of the -Tyr-|-Leu- and -Tyr-|-Trp bonds also occurs).. Functionally, cleaves peptides in various proteins in a process that requires ATP hydrolysis. Has a chymotrypsin-like activity. Plays a major role in the degradation of misfolded proteins. The protein is ATP-dependent Clp protease proteolytic subunit 4 of Frankia casuarinae (strain DSM 45818 / CECT 9043 / HFP020203 / CcI3).